Here is an 80-residue protein sequence, read N- to C-terminus: Clavanin-C (80 aa).

An N-terminal signal peptide occupies residues 1-19 (MKTTILILLILGLGINAKS). Positions 20 to 29 (LEERKSEEEK) are excised as a propeptide. Position 52 is a phenylalanine amide (phenylalanine 52). A propeptide spanning residues 54 to 80 (DDQQDNGKFYGHYAEDNGKHWYDTGDQ) is cleaved from the precursor.

As to expression, hemocytes and pharyngeal tissues.

Its subcellular location is the secreted. In terms of biological role, has antimicrobial activity against E.coli, L.monocytogenes and C.albicans. The sequence is that of Clavanin-C from Styela clava (Sea squirt).